The chain runs to 322 residues: Corticotropin-releasing factor-binding protein (322 aa).

The N-terminal stretch at 1 to 24 (MSPNFKLQCHFTLILLTALRGESR) is a signal peptide. 5 disulfides stabilise this stretch: cysteine 60/cysteine 81, cysteine 104/cysteine 141, cysteine 183/cysteine 205, cysteine 237/cysteine 264, and cysteine 277/cysteine 318. The N-linked (GlcNAc...) asparagine glycan is linked to asparagine 204.

Belongs to the CRF-binding protein family.

It is found in the secreted. Functionally, binds CRF and inactivates it. May prevent inappropriate pituitary-adrenal stimulation in pregnancy. The protein is Corticotropin-releasing factor-binding protein (Crhbp) of Rattus norvegicus (Rat).